A 171-amino-acid chain; its full sequence is 3-hydroxydecanoyl-[acyl-carrier-protein] dehydratase (171 aa).

Histidine 70 is a catalytic residue.

This sequence belongs to the thioester dehydratase family. FabA subfamily. Homodimer.

The protein localises to the cytoplasm. The catalysed reaction is a (3R)-hydroxyacyl-[ACP] = a (2E)-enoyl-[ACP] + H2O. It catalyses the reaction (3R)-hydroxydecanoyl-[ACP] = (2E)-decenoyl-[ACP] + H2O. The enzyme catalyses (2E)-decenoyl-[ACP] = (3Z)-decenoyl-[ACP]. The protein operates within lipid metabolism; fatty acid biosynthesis. In terms of biological role, necessary for the introduction of cis unsaturation into fatty acids. Catalyzes the dehydration of (3R)-3-hydroxydecanoyl-ACP to E-(2)-decenoyl-ACP and then its isomerization to Z-(3)-decenoyl-ACP. Can catalyze the dehydratase reaction for beta-hydroxyacyl-ACPs with saturated chain lengths up to 16:0, being most active on intermediate chain length. The sequence is that of 3-hydroxydecanoyl-[acyl-carrier-protein] dehydratase from Colwellia psychrerythraea (strain 34H / ATCC BAA-681) (Vibrio psychroerythus).